The sequence spans 187 residues: Small ribosomal subunit protein uS10m (187 aa).

This sequence belongs to the universal ribosomal protein uS10 family. As to quaternary structure, component of the mitochondrial ribosome small subunit (28S) which comprises a 12S rRNA and about 30 distinct proteins.

The protein resides in the mitochondrion. This Danio rerio (Zebrafish) protein is Small ribosomal subunit protein uS10m (mrps10).